The primary structure comprises 182 residues: Glycerol-3-phosphate acyltransferase 1 (182 aa).

Helical transmembrane passes span 5 to 25 (MQFL…AYIV), 54 to 74 (GYFV…VSIA), 81 to 101 (STFL…PILF), 117 to 137 (IAFD…FYLI), and 157 to 177 (ILYS…VLIL).

Belongs to the PlsY family. As to quaternary structure, probably interacts with PlsX.

Its subcellular location is the cell membrane. It catalyses the reaction an acyl phosphate + sn-glycerol 3-phosphate = a 1-acyl-sn-glycero-3-phosphate + phosphate. The protein operates within lipid metabolism; phospholipid metabolism. Its function is as follows. Catalyzes the transfer of an acyl group from acyl-phosphate (acyl-PO(4)) to glycerol-3-phosphate (G3P) to form lysophosphatidic acid (LPA). This enzyme utilizes acyl-phosphate as fatty acyl donor, but not acyl-CoA or acyl-ACP. This chain is Glycerol-3-phosphate acyltransferase 1, found in Bacillus thuringiensis subsp. konkukian (strain 97-27).